The chain runs to 423 residues: Divalent metal cation transporter MntH (423 aa).

11 consecutive transmembrane segments (helical) span residues 31–51 (LMML…GNFA), 58–78 (SSFG…AMLI), 116–136 (IIAI…FQLV), 137–157 (FGIS…MILI), 168–188 (VVIG…LFFA), 213–233 (AAGI…SALF), 254–274 (IAMV…AAVF), 302–322 (VLFG…GTMA), 342–362 (FITM…TDIL), 363–383 (VMSQ…LLIF), and 401–421 (YAGV…MVTL).

It belongs to the NRAMP family.

The protein resides in the cell inner membrane. In terms of biological role, h(+)-stimulated, divalent metal cation uptake system. This Vibrio campbellii (strain ATCC BAA-1116) protein is Divalent metal cation transporter MntH.